Reading from the N-terminus, the 681-residue chain is Type VI secretion system spike protein VgrG2 (681 aa).

The disordered stretch occupies residues 284–309 (AVAGSGKSNSSALQPGQTFSLTEHPN). The segment covering 289 to 309 (GKSNSSALQPGQTFSLTEHPN) has biased composition (polar residues).

The protein belongs to the VgrG protein family.

Functionally, part of the type VI secretion system specialized secretion system, which delivers several virulence factors in both prokaryotic and eukaryotic cells during infection. Plays an essential role in bacterial mobility and biofilm formation. In Aeromonas hydrophila, this protein is Type VI secretion system spike protein VgrG2.